A 791-amino-acid polypeptide reads, in one-letter code: Centrosomal protein of 89 kDa (791 aa).

The interval 27 to 203 (APKPAVPRTP…HTQQKDVKHS (177 aa)) is disordered. A compositionally biased stretch (pro residues) spans 30–45 (PAVPRTPPPRSPNPSP). Phosphoserine is present on Ser50. Residues 50 to 62 (SALAAAILATTLT) are compositionally biased toward low complexity. Over residues 75–89 (SRSESDASDIEKDSF) the composition is skewed to basic and acidic residues. A compositionally biased stretch (polar residues) spans 94 to 107 (ATTSELRLRQSWQN). A compositionally biased stretch (basic and acidic residues) spans 137–161 (RESESTWKDVGDGRDATYTVPHRDQ). Positions 181–190 (SDSSSSSSSS) are enriched in low complexity. Coiled-coil stretches lie at residues 252-291 (SANQ…TEKA), 370-598 (LLAY…MGKE), and 670-737 (HRLK…SLLQ).

The protein resides in the cytoplasm. It localises to the cytosol. The protein localises to the cytoskeleton. Its subcellular location is the microtubule organizing center. It is found in the centrosome. The protein resides in the spindle pole. It localises to the centriole. The protein localises to the mitochondrion intermembrane space. Functionally, required for ciliogenesis. Also plays a role in mitochondrial metabolism where it may modulate complex IV activity. This chain is Centrosomal protein of 89 kDa (Cep89), found in Mus musculus (Mouse).